A 565-amino-acid polypeptide reads, in one-letter code: NAD-dependent malic enzyme (565 aa).

Y104 serves as the catalytic Proton donor. R157 is an NAD(+) binding site. K175 functions as the Proton acceptor in the catalytic mechanism. 3 residues coordinate a divalent metal cation: E246, D247, and D270. Positions 270 and 418 each coordinate NAD(+).

This sequence belongs to the malic enzymes family. Homotetramer. Mg(2+) is required as a cofactor. Requires Mn(2+) as cofactor.

The catalysed reaction is (S)-malate + NAD(+) = pyruvate + CO2 + NADH. The enzyme catalyses oxaloacetate + H(+) = pyruvate + CO2. The polypeptide is NAD-dependent malic enzyme (Salmonella arizonae (strain ATCC BAA-731 / CDC346-86 / RSK2980)).